We begin with the raw amino-acid sequence, 718 residues long: Catalase-peroxidase (718 aa).

The tryptophyl-tyrosyl-methioninium (Trp-Tyr) (with M-245) cross-link spans W98–Y219. The active-site Proton acceptor is the H99. Positions Y219 to M245 form a cross-link, tryptophyl-tyrosyl-methioninium (Tyr-Met) (with W-98). Residue H260 participates in heme b binding.

It belongs to the peroxidase family. Peroxidase/catalase subfamily. In terms of assembly, homodimer or homotetramer. Heme b serves as cofactor. Post-translationally, formation of the three residue Trp-Tyr-Met cross-link is important for the catalase, but not the peroxidase activity of the enzyme.

It carries out the reaction H2O2 + AH2 = A + 2 H2O. It catalyses the reaction 2 H2O2 = O2 + 2 H2O. Functionally, bifunctional enzyme with both catalase and broad-spectrum peroxidase activity. The sequence is that of Catalase-peroxidase from Acinetobacter baumannii (strain ATCC 17978 / DSM 105126 / CIP 53.77 / LMG 1025 / NCDC KC755 / 5377).